The following is a 431-amino-acid chain: UPF0597 protein LCA_0156 (431 aa).

Belongs to the UPF0597 family.

This is UPF0597 protein LCA_0156 from Latilactobacillus sakei subsp. sakei (strain 23K) (Lactobacillus sakei subsp. sakei).